A 351-amino-acid chain; its full sequence is Cardiolipin synthase (CMP-forming) (351 aa).

The segment at 74 to 120 (PAPQLSASHQHQAQQQQQQTKQPQQPYDPQQDQVPSTSTASSSKPAA) is disordered. Low complexity predominate over residues 76–120 (PQLSASHQHQAQQQQQQTKQPQQPYDPQQDQVPSTSTASSSKPAA). The next 5 membrane-spanning stretches (helical) occupy residues 139 to 159 (PLIG…ALAV), 191 to 211 (VLIG…GWVA), 251 to 271 (AAAA…GGGG), 280 to 300 (PLLI…GYLL), and 321 to 341 (LIMG…LAYG).

Belongs to the CDP-alcohol phosphatidyltransferase class-I family. The cofactor is Mn(2+).

The protein resides in the mitochondrion inner membrane. The catalysed reaction is a CDP-1,2-diacyl-sn-glycerol + a 1,2-diacyl-sn-glycero-3-phospho-(1'-sn-glycerol) = a cardiolipin + CMP + H(+). In terms of biological role, catalyzes the synthesis of cardiolipin (CL) (diphosphatidylglycerol) by specifically transferring a phosphatidyl group from CDP-diacylglycerol to phosphatidylglycerol (PG). CL is a key phospholipid in mitochondrial membranes and plays important roles in maintaining the functional integrity and dynamics of mitochondria under both optimal and stress conditions. Cannot catalyze the phosphatidyl group transfer from one PG molecule to another to form CL. The protein is Cardiolipin synthase (CMP-forming) of Chlamydomonas reinhardtii (Chlamydomonas smithii).